The chain runs to 227 residues: Pyridoxine/pyridoxamine 5'-phosphate oxidase (227 aa).

Substrate contacts are provided by residues 23-26 (RREY) and lysine 81. Residues 76–81 (RIVLLK), 91–92 (YT), arginine 97, lysine 98, and glutamine 120 each bind FMN. The substrate site is built by tyrosine 138, arginine 142, and serine 146. FMN contacts are provided by residues 155 to 156 (QS) and tryptophan 200. Position 206–208 (206–208 (RLH)) interacts with substrate. Arginine 210 serves as a coordination point for FMN.

The protein belongs to the pyridoxamine 5'-phosphate oxidase family. In terms of assembly, homodimer. Requires FMN as cofactor.

The enzyme catalyses pyridoxamine 5'-phosphate + O2 + H2O = pyridoxal 5'-phosphate + H2O2 + NH4(+). It carries out the reaction pyridoxine 5'-phosphate + O2 = pyridoxal 5'-phosphate + H2O2. It participates in cofactor metabolism; pyridoxal 5'-phosphate salvage; pyridoxal 5'-phosphate from pyridoxamine 5'-phosphate: step 1/1. Its pathway is cofactor metabolism; pyridoxal 5'-phosphate salvage; pyridoxal 5'-phosphate from pyridoxine 5'-phosphate: step 1/1. In terms of biological role, catalyzes the oxidation of either pyridoxine 5'-phosphate (PNP) or pyridoxamine 5'-phosphate (PMP) into pyridoxal 5'-phosphate (PLP). The protein is Pyridoxine/pyridoxamine 5'-phosphate oxidase of Pectobacterium atrosepticum (strain SCRI 1043 / ATCC BAA-672) (Erwinia carotovora subsp. atroseptica).